We begin with the raw amino-acid sequence, 297 residues long: Giardin subunit alpha-6 (297 aa).

Annexin repeat units lie at residues 3 to 72 (TTVQ…AYLW), 74 to 146 (KPGD…HWIL), 153 to 222 (FDID…AAHY), and 226 to 295 (HPAR…ILWR).

It belongs to the annexin family. Giardin subunit alpha subfamily.

The protein localises to the cytoplasm. Its subcellular location is the cytoskeleton. In terms of biological role, giardins are involved in parasite attachment to the intestinal mucosa and in the cytoskeletal disassembly and reassembly that marks the transition from infectious trophozoite to transmissible cyst. They may interact with other cytoskeletal proteins such as microtubules in the microribbons or crossbridges, to maintain the integrity of the ventral disk. This Giardia intestinalis (Giardia lamblia) protein is Giardin subunit alpha-6.